The chain runs to 697 residues: Potassium-transporting ATPase ATP-binding subunit (697 aa).

4 consecutive transmembrane segments (helical) span residues 55–75 (PIMFVVEIGFVITFILSFFPS), 79–99 (SIPGWFNITVSLILLFTVLFA), 245–265 (LTLIFLIVVVTLPIFTNYLGF), and 271–291 (VLVALLVCLIPTTIGGLLSAI). Asp-324 functions as the 4-aspartylphosphate intermediate in the catalytic mechanism. ATP-binding positions include Asp-361, Glu-365, 393-400 (FKAETRMS), and Lys-412. Mg(2+)-binding residues include Asp-535 and Asp-539. The next 3 membrane-spanning stretches (helical) occupy residues 605–625 (FAIIPAMFTLAIPQMEALNIM), 633–653 (AILSALLFNAVIIPLLIPLAM), and 677–697 (GGVIVPFIGIKVIDIIVGLFI).

The protein belongs to the cation transport ATPase (P-type) (TC 3.A.3) family. Type IA subfamily. As to quaternary structure, the system is composed of three essential subunits: KdpA, KdpB and KdpC.

It localises to the cell membrane. It carries out the reaction K(+)(out) + ATP + H2O = K(+)(in) + ADP + phosphate + H(+). Its function is as follows. Part of the high-affinity ATP-driven potassium transport (or Kdp) system, which catalyzes the hydrolysis of ATP coupled with the electrogenic transport of potassium into the cytoplasm. This subunit is responsible for energy coupling to the transport system and for the release of the potassium ions to the cytoplasm. This Bacillus cereus (strain AH820) protein is Potassium-transporting ATPase ATP-binding subunit.